The following is a 97-amino-acid chain: ESAT-6-like protein EsxA (97 aa).

Belongs to the WXG100 family. ESAT-6 subfamily. As to quaternary structure, forms a tight 1:1 complex with EsxB. Forms a complex with EccC and EsxB, probably wholly mediated by EsxB.

The protein localises to the secreted. Functionally, may help regulate assembly and function of the type VII secretion system (T7SS). EsxA disassembles pre-formed EccC-EsxB multimers, possibly by making EccC-EsxA-EsxB trimers instead of EccC-EsxB-EsxB-EccC tetramers. The chain is ESAT-6-like protein EsxA from Thermomonospora curvata (strain ATCC 19995 / DSM 43183 / JCM 3096 / KCTC 9072 / NBRC 15933 / NCIMB 10081 / Henssen B9).